A 425-amino-acid polypeptide reads, in one-letter code: Histidine--tRNA ligase (425 aa).

Belongs to the class-II aminoacyl-tRNA synthetase family. As to quaternary structure, homodimer.

The protein resides in the cytoplasm. The enzyme catalyses tRNA(His) + L-histidine + ATP = L-histidyl-tRNA(His) + AMP + diphosphate + H(+). The polypeptide is Histidine--tRNA ligase (Histophilus somni (strain 129Pt) (Haemophilus somnus)).